The chain runs to 475 residues: MDRRTKIVCTLGPAVASADGILRLVEDGMDVARLNFSHGDHPDHEQNYKWVREAAEKTGRAVGILADLQGPKIRLGRFTDGATVWENGETIRITVDDVEGTHDRVSTTYKNLAKDAKPGDRLLVDDGKVGLVCVSVEGNDVICEVVEGGPVSNNKGVSLPGMDISVPALSEKDIRDLRFALKLGVDFIALSFVRSPADAELVHKIMDEEGRRVPVIAKLEKPEAVTSLEPIVLAFDAVMVARGDLGVEVPLEEVPLVQKRAIQIARENAKPVIVATQMLDSMIENSRPTRAEASDVANAVLDGADAVMLSGETSVGKDPHNVVRTMSRIVRFAETDGRVPDLTHIPRTKRGVISYSARDIAERLNARALVAFTTSGDTAKRVARLHSHLPLLVFTPNEAVRSELALTWGATTFLCPPVSDTDDMMREVDRALLAMPEYNKGDMMVVVAGSPPGVTGNTNMIHVHLLGDDTRIAKL.

Arg-33 contributes to the substrate binding site. K(+)-binding residues include Asn-35, Ser-37, and Asp-67. 35 to 38 (NFSH) contributes to the ATP binding site. ATP is bound by residues Arg-74 and Lys-155. Glu-220 provides a ligand contact to Mg(2+). Residues Gly-243, Asp-244, and Thr-276 each contribute to the substrate site. Asp-244 is a Mg(2+) binding site.

Belongs to the pyruvate kinase family. As to quaternary structure, homotetramer. Mg(2+) is required as a cofactor. Requires K(+) as cofactor.

The enzyme catalyses pyruvate + ATP = phosphoenolpyruvate + ADP + H(+). It functions in the pathway carbohydrate degradation; glycolysis; pyruvate from D-glyceraldehyde 3-phosphate: step 5/5. In Corynebacterium glutamicum (strain ATCC 13032 / DSM 20300 / JCM 1318 / BCRC 11384 / CCUG 27702 / LMG 3730 / NBRC 12168 / NCIMB 10025 / NRRL B-2784 / 534), this protein is Pyruvate kinase (pyk).